The chain runs to 2067 residues: Separin (2067 aa).

4 disordered regions span residues 51-91, 140-167, 1316-1363, and 1449-1478; these read RTAR…AQDV, KKDA…TDNE, DLEE…SVEA, and LEPK…TKAQ. The span at 55–86 shows a compositional bias: low complexity; that stretch reads GTKATATNATASSRAKTTRTKSTSTSTTRTKT. 2 stretches are compositionally biased toward low complexity: residues 1333-1354 and 1449-1461; these read TRQP…ARST and LEPK…SSKS. Residues 1880-1975 enclose the Peptidase C50 domain; sequence RRNGTYILNP…SGTLTEAGEY (96 aa). The active site involves cysteine 1964.

The protein resides in the nucleus. The enzyme catalyses All bonds known to be hydrolyzed by this endopeptidase have arginine in P1 and an acidic residue in P4. P6 is often occupied by an acidic residue or by a hydroxy-amino-acid residue, the phosphorylation of which enhances cleavage.. Functionally, required for nuclear division. Could function in the mitotic spindle. The polypeptide is Separin (bimB) (Emericella nidulans (strain FGSC A4 / ATCC 38163 / CBS 112.46 / NRRL 194 / M139) (Aspergillus nidulans)).